Reading from the N-terminus, the 333-residue chain is MNKLTTIESHFLQQQKLYPEINSEVTGLLNDVAFAAKLVRREVVRAGLADILGLAGSTNVQGEEVKKLDLFANERLINAIGQHGRFAIMGSEENEETITPPKFESGEYVLLFDPLDGSSNIDVNVSVGTIFSIYRLKSDNPSQASIEDCLQKGADQVAAGYVIYGSSVMLVYTTGHGVHGFTFDQTVGEFLLSHENITTPEHGKYYSVNEGSWNEFHDGTKLFLDYLKEEDKATGRPYSTRYIGSFVADFHRNLLTGGVFIYPATKKHKNGKLRLMYEANPMAFICEQAGGRATDGHRRILDIEPVELHQRTPLYIGSKNDVLIAEEFEQDKR.

Residues Glu92, Asp113, Leu115, and Asp116 each coordinate Mg(2+). Substrate contacts are provided by residues 116–119 (DGSS), Asn209, Tyr242, and Lys272. Glu278 contributes to the Mg(2+) binding site.

This sequence belongs to the FBPase class 1 family. In terms of assembly, homotetramer. The cofactor is Mg(2+).

The protein resides in the cytoplasm. It carries out the reaction beta-D-fructose 1,6-bisphosphate + H2O = beta-D-fructose 6-phosphate + phosphate. It functions in the pathway carbohydrate biosynthesis; Calvin cycle. The polypeptide is Fructose-1,6-bisphosphatase class 1 (Chlorobaculum parvum (strain DSM 263 / NCIMB 8327) (Chlorobium vibrioforme subsp. thiosulfatophilum)).